A 145-amino-acid chain; its full sequence is 3-hydroxyacyl-[acyl-carrier-protein] dehydratase FabZ (145 aa).

The active site involves H48.

This sequence belongs to the thioester dehydratase family. FabZ subfamily.

The protein localises to the cytoplasm. The catalysed reaction is a (3R)-hydroxyacyl-[ACP] = a (2E)-enoyl-[ACP] + H2O. Involved in unsaturated fatty acids biosynthesis. Catalyzes the dehydration of short chain beta-hydroxyacyl-ACPs and long chain saturated and unsaturated beta-hydroxyacyl-ACPs. The protein is 3-hydroxyacyl-[acyl-carrier-protein] dehydratase FabZ of Marinomonas sp. (strain MWYL1).